The chain runs to 382 residues: Prostaglandin D2 receptor 2 (382 aa).

Over 1–32 (MANVTLKPLCPLLEEMVQLPNHSNSSLRYIDH) the chain is Extracellular. Residues Asn-3, Asn-21, and Asn-24 are each glycosylated (N-linked (GlcNAc...) asparagine). A helical membrane pass occupies residues 33 to 55 (VSVLLHGLASLLGLVENGLILFV). The Cytoplasmic portion of the chain corresponds to 56-66 (VGCRMRQTVVT). The helical transmembrane segment at 67-88 (TWVLHLALSDLLAAASLPFFTY) threads the bilayer. The Extracellular portion of the chain corresponds to 89 to 105 (FLAVGHSWELGTTFCKL). An intrachain disulfide couples Cys-103 to Cys-181. The chain crosses the membrane as a helical span at residues 106-126 (HSSVFFLNMFASGFLLSAISL). Residues 127–145 (DRCLQVVRPVWAQNHRTVA) lie on the Cytoplasmic side of the membrane. Residues 146-167 (VAHRVCLMLWALAVLNTIPYFV) traverse the membrane as a helical segment. Residues 168–209 (FRDTIPRLDGRIMCYYNLLLWNPGPDRDTTCDYRQKALAVSK) lie on the Extracellular side of the membrane. Residues 210–230 (FLLAFMVPLAIIASSHVAVSL) form a helical membrane-spanning segment. The Cytoplasmic segment spans residues 231–246 (RLHHRGRQRTGRFVRL). A helical membrane pass occupies residues 247–268 (VAAIVVAFVLCWGPYHIFSLLE). Over 269-287 (ARAHSVTTLRQLASRGLPF) the chain is Extracellular. Residues 288–307 (VTSLAFFNSVVNPLLYVFTC) form a helical membrane-spanning segment. Residues 308 to 357 (PDMLYKLRRSLRAVLESVLVEDSDQSGGLRNRRRRASSTATPASTLLLAD) are Cytoplasmic-facing. An Involved in the recycling of CRTH2 motif is present at residues 329–332 (DSDQ). Phosphoserine occurs at positions 330 and 344.

The protein belongs to the G-protein coupled receptor 1 family. Post-translationally, phosphorylated.

The protein resides in the cell membrane. Functionally, receptor for prostaglandin D2 (PGD2). Coupled to the G(i)-protein. Receptor activation may result in pertussis toxin-sensitive decreases in cAMP levels and Ca(2+) mobilization. PI3K signaling is also implicated in mediating PTGDR2 effects. PGD2 induced receptor internalization. CRTH2 internalization can be regulated by diverse kinases such as, PKC, PKA, GRK2, GPRK5/GRK5 and GRK6. Receptor activation is responsible, at least in part, in immune regulation and allergic/inflammation responses. In Mus musculus (Mouse), this protein is Prostaglandin D2 receptor 2 (Ptgdr2).